The following is a 221-amino-acid chain: Translation initiation factor 6 (221 aa).

It belongs to the eIF-6 family.

Its function is as follows. Binds to the 50S ribosomal subunit and prevents its association with the 30S ribosomal subunit to form the 70S initiation complex. In Methanosphaerula palustris (strain ATCC BAA-1556 / DSM 19958 / E1-9c), this protein is Translation initiation factor 6.